A 324-amino-acid chain; its full sequence is MSTLTPGRPYAPGRQGFSSLRAGGLNWDAFPLRLFTKGNAKFWNPTDLDFSRDAEDWEGLNSEQQRNSTYLVAQFIAGEEAVTEDIQPFMKAMAAEGRFGDEMYLTQFCFEEAKHTQVFRLWMDAVGLTRDLHPFVAENPYYRQLFYEELPGSLKVLETDPSPVNQVRASVTYNHVIEGSLALTGYYAWQKVCTTRGILPGMQELVRRIGDDERRHMAWGTFTCRRHVAADDSNWGVVQERMAELMPLALGMIDWVNKQFEVQPYGLDDQEFIAYAADRAQRRLGAIESARGRPVEEIDLDYSPEALEEKFGEEDAKAMSEAAG.

3 residues coordinate Mn(2+): Glu-79, Glu-112, and His-115. Positions 82 to 173 (VTEDIQPFMK…VNQVRASVTY (92 aa)) form a cross-link, 3-(O4'-tyrosyl)-valine (Val-Tyr). Fe cation is bound at residue Glu-112. Fe cation-binding residues include Glu-178, Glu-213, and His-216. The tract at residues 304–324 (PEALEEKFGEEDAKAMSEAAG) is disordered. The segment covering 307–318 (LEEKFGEEDAKA) has biased composition (basic and acidic residues).

Belongs to the ribonucleoside diphosphate reductase small chain family. R2-like ligand binding oxidase subfamily. In terms of assembly, homodimer. Fe cation is required as a cofactor. The cofactor is Mn(2+).

In terms of biological role, probable oxidase. This Rhodococcus jostii (strain RHA1) protein is R2-like ligand binding oxidase.